The primary structure comprises 492 residues: NADH-ubiquinone oxidoreductase chain 4 (492 aa).

15 consecutive transmembrane segments (helical) span residues 9–29 (LILT…IPSA), 36–56 (NFAL…WIQF), 63–83 (FQFS…TIGI), 86–106 (ISLF…LVSW), 115–135 (DYLI…SVLD), 136–156 (LLLF…IVGV), 170–190 (FFLY…NIYF), 211–231 (IFLW…IPFH), 242–262 (PTAG…YGFL), 269–289 (FPVA…VAII), 304–324 (IIAY…FSLN), 332–352 (ILLM…IGVL), 370–390 (VMPL…GFPG), 410–430 (TLTL…IWLF), and 454–474 (FWIL…PNSF).

This sequence belongs to the complex I subunit 4 family.

It is found in the mitochondrion membrane. The enzyme catalyses a ubiquinone + NADH + 5 H(+)(in) = a ubiquinol + NAD(+) + 4 H(+)(out). Its function is as follows. Core subunit of the mitochondrial membrane respiratory chain NADH dehydrogenase (Complex I) that is believed to belong to the minimal assembly required for catalysis. Complex I functions in the transfer of electrons from NADH to the respiratory chain. The immediate electron acceptor for the enzyme is believed to be ubiquinone. The polypeptide is NADH-ubiquinone oxidoreductase chain 4 (ND4) (Chondrus crispus (Carrageen Irish moss)).